Consider the following 282-residue polypeptide: Elongation factor Ts (282 aa).

An involved in Mg(2+) ion dislocation from EF-Tu region spans residues 80-83 (TDFV).

The protein belongs to the EF-Ts family.

It is found in the cytoplasm. Functionally, associates with the EF-Tu.GDP complex and induces the exchange of GDP to GTP. It remains bound to the aminoacyl-tRNA.EF-Tu.GTP complex up to the GTP hydrolysis stage on the ribosome. This Chlamydia felis (strain Fe/C-56) (Chlamydophila felis) protein is Elongation factor Ts.